A 207-amino-acid chain; its full sequence is Homeobox protein BarH-like 1 (207 aa).

The segment at residues 95 to 154 is a DNA-binding region (homeobox); sequence GRRSRTVFTELQLMGLEKRFEKQKYLSTPDRIDLAESLGLSQLQVKTWYQNRRMKWKKIV. Residues 157-207 are disordered; sequence GGGLESPTKPKGRPKKNSIPSSEQLSEQERAKETEKPPESPGEPSERQQEE. A compositionally biased stretch (basic and acidic residues) spans 183–207; sequence EQERAKETEKPPESPGEPSERQQEE.

The protein belongs to the BAR homeobox family. In terms of tissue distribution, expressed predominantly in the facial primordia, developing stomach, and proximal limbs.

It localises to the nucleus. Its function is as follows. Transcription factor, which is involved in craniofacial development, in odontogenic region definition, and in stomach organogenesis. Binds to a regulatory module of the NCAM promoter. The sequence is that of Homeobox protein BarH-like 1 (BARX1) from Gallus gallus (Chicken).